Reading from the N-terminus, the 142-residue chain is Large ribosomal subunit protein uL11 (142 aa).

It belongs to the universal ribosomal protein uL11 family. Part of the ribosomal stalk of the 50S ribosomal subunit. Interacts with L10 and the large rRNA to form the base of the stalk. L10 forms an elongated spine to which L12 dimers bind in a sequential fashion forming a multimeric L10(L12)X complex. In terms of processing, one or more lysine residues are methylated.

Its function is as follows. Forms part of the ribosomal stalk which helps the ribosome interact with GTP-bound translation factors. The sequence is that of Large ribosomal subunit protein uL11 from Xylella fastidiosa (strain Temecula1 / ATCC 700964).